Consider the following 592-residue polypeptide: 1,4-alpha-glucan branching enzyme GlgB 2 (592 aa).

The active-site Nucleophile is the D274. E327 (proton donor) is an active-site residue.

Belongs to the glycosyl hydrolase 13 family. GlgB subfamily. Monomer.

It carries out the reaction Transfers a segment of a (1-&gt;4)-alpha-D-glucan chain to a primary hydroxy group in a similar glucan chain.. The protein operates within glycan biosynthesis; glycogen biosynthesis. Functionally, catalyzes the formation of the alpha-1,6-glucosidic linkages in glycogen by scission of a 1,4-alpha-linked oligosaccharide from growing alpha-1,4-glucan chains and the subsequent attachment of the oligosaccharide to the alpha-1,6 position. The chain is 1,4-alpha-glucan branching enzyme GlgB 2 from Streptomyces avermitilis (strain ATCC 31267 / DSM 46492 / JCM 5070 / NBRC 14893 / NCIMB 12804 / NRRL 8165 / MA-4680).